A 603-amino-acid polypeptide reads, in one-letter code: Elongation factor 4 (603 aa).

The 183-residue stretch at 7-189 (SRIRNFSIIA…SIVHLVPPPQ (183 aa)) folds into the tr-type G domain. GTP contacts are provided by residues 19-24 (DHGKST) and 136-139 (NKID).

It belongs to the TRAFAC class translation factor GTPase superfamily. Classic translation factor GTPase family. LepA subfamily.

The protein localises to the cell inner membrane. It carries out the reaction GTP + H2O = GDP + phosphate + H(+). In terms of biological role, required for accurate and efficient protein synthesis under certain stress conditions. May act as a fidelity factor of the translation reaction, by catalyzing a one-codon backward translocation of tRNAs on improperly translocated ribosomes. Back-translocation proceeds from a post-translocation (POST) complex to a pre-translocation (PRE) complex, thus giving elongation factor G a second chance to translocate the tRNAs correctly. Binds to ribosomes in a GTP-dependent manner. The chain is Elongation factor 4 from Cyanothece sp. (strain PCC 7425 / ATCC 29141).